We begin with the raw amino-acid sequence, 237 residues long: UPF0173 metal-dependent hydrolase BOV_A0561 (237 aa).

The protein belongs to the UPF0173 family.

This is UPF0173 metal-dependent hydrolase BOV_A0561 from Brucella ovis (strain ATCC 25840 / 63/290 / NCTC 10512).